A 1191-amino-acid chain; its full sequence is Laminin subunit gamma-2 (1191 aa).

The signal sequence occupies residues 1–21 (MPALWLSCCLGVALLLPAAQA). 12 disulfides stabilise this stretch: C28–C37, C30–C53, C56–C65, C68–C81, C84–C96, C86–C102, C104–C113, C116–C128, C139–C150, C141–C155, C157–C166, and C169–C184. Laminin EGF-like domains are found at residues 28–83 (CDCN…RCLP), 84–130 (CNCH…GCTR), and 139–186 (CDCD…GCTQ). In terms of domain architecture, Laminin EGF-like 4; first part spans 187-196 (CFCYGHSASC). The Laminin IV type A domain maps to 213 to 381 (QDVDGWKAVQ…SGAPAPWVER (169 aa)). N-linked (GlcNAc...) asparagine glycosylation is found at N342 and N362. A Laminin EGF-like 4; second part domain is found at 382–415 (CVCPAGYKGQFCQECASGYKRDSARLGPFGACVP). 3 Laminin EGF-like domains span residues 416–461 (CNCQ…SCKP), 462–516 (CPCH…PCQR), and 517–572 (CQCN…KCRA). 11 disulfide bridges follow: C462–C470, C464–C481, C484–C493, C496–C514, C517–C531, C519–C538, C541–C550, C553–C570, C573–C585, C575–C591, and C593–C602. An N-linked (GlcNAc...) asparagine glycan is attached at N526. Residues 573-602 (CNCSPMGSEPGECRGDGSCVCKPGFGGLNC) enclose the Laminin EGF-like 8; truncated domain. The short motif at 586-588 (RGD) is the Cell attachment site element. A domain II and I region spans residues 603–1191 (DHAALTSCPA…CYNTQALEQQ (589 aa)). 2 coiled-coil regions span residues 612–710 (ACYN…IRAL) and 759–786 (LAQE…ETED). Residue S805 is glycosylated (O-linked (Xyl...) (chondroitin sulfate) serine). N-linked (GlcNAc...) asparagine glycosylation is present at N941. The stretch at 946 to 996 (EVENILKNLREFDLQVEDRKAEAEEAMKRLSSISQKVADASDKTQQAETAL) forms a coiled coil. A glycan (N-linked (GlcNAc...) asparagine) is linked at N1032. Residues 1139–1178 (LMSDLEERVRRQRNHLHLLETSIDGILADVKNLENIRDNL) adopt a coiled-coil conformation.

Laminin is a complex glycoprotein, consisting of three different polypeptide chains (alpha, beta, gamma), which are bound to each other by disulfide bonds into a cross-shaped molecule comprising one long and three short arms with globules at each end. Gamma-2 is a subunit of laminin-5 (laminin-332 or epiligrin/kalinin/nicein). Binds to fibulin-1, fibulin-1c, fibulin-2 and nidogen. O-glycosylated; contains chondroitin sulfate (CS). Epithelial cells of many tissues, particularly high levels in tongue, hair follicles and kidney. Basement membranes of the collecting tubules of kidney and pancreas.

It localises to the secreted. The protein resides in the extracellular space. It is found in the extracellular matrix. Its subcellular location is the basement membrane. In terms of biological role, binding to cells via a high affinity receptor, laminin is thought to mediate the attachment, migration and organization of cells into tissues during embryonic development by interacting with other extracellular matrix components. The chain is Laminin subunit gamma-2 (Lamc2) from Mus musculus (Mouse).